The primary structure comprises 239 residues: Fatty acid metabolism regulator protein (239 aa).

One can recognise an HTH gntR-type domain in the interval 6 to 74 (QSPAGFAEEY…HGKPTKVNNF (69 aa)). A DNA-binding region (H-T-H motif) is located at residues 34–53 (ERELSELIGVTRTTLREVLQ).

In terms of assembly, homodimer.

The protein localises to the cytoplasm. Its function is as follows. Multifunctional regulator of fatty acid metabolism. The protein is Fatty acid metabolism regulator protein of Salmonella paratyphi C (strain RKS4594).